We begin with the raw amino-acid sequence, 483 residues long: Threonine synthase-like 2 (483 aa).

K113 bears the N6-(pyridoxal phosphate)lysine mark.

This sequence belongs to the threonine synthase family. It depends on pyridoxal 5'-phosphate as a cofactor.

Functionally, acts as a catabolic phospho-lyase on both gamma- and beta-phosphorylated substrates. Degrades O-phospho-threonine (PThr) to alpha-ketobutyrate, ammonia and phosphate. Also degrades O-phospho-homoserine (PHS), but this is not its physiological substrate. In Mus musculus (Mouse), this protein is Threonine synthase-like 2 (Thnsl2).